Consider the following 108-residue polypeptide: Nucleoid-associated protein PSHAa1202 (108 aa).

Disordered regions lie at residues 1 to 20 (MFKGGMGNMMKQAQQMQDRM) and 87 to 108 (TQERMGKVTGGMQLPPGMKMPF).

The protein belongs to the YbaB/EbfC family. As to quaternary structure, homodimer.

It is found in the cytoplasm. The protein localises to the nucleoid. Binds to DNA and alters its conformation. May be involved in regulation of gene expression, nucleoid organization and DNA protection. This chain is Nucleoid-associated protein PSHAa1202, found in Pseudoalteromonas translucida (strain TAC 125).